Here is a 251-residue protein sequence, read N- to C-terminus: 5-oxoprolinase subunit A (251 aa).

Belongs to the LamB/PxpA family. Forms a complex composed of PxpA, PxpB and PxpC.

The catalysed reaction is 5-oxo-L-proline + ATP + 2 H2O = L-glutamate + ADP + phosphate + H(+). Catalyzes the cleavage of 5-oxoproline to form L-glutamate coupled to the hydrolysis of ATP to ADP and inorganic phosphate. In Vibrio campbellii (strain ATCC BAA-1116), this protein is 5-oxoprolinase subunit A.